Here is a 309-residue protein sequence, read N- to C-terminus: GTP cyclohydrolase FolE2 (309 aa).

The protein belongs to the GTP cyclohydrolase IV family.

The catalysed reaction is GTP + H2O = 7,8-dihydroneopterin 3'-triphosphate + formate + H(+). It functions in the pathway cofactor biosynthesis; 7,8-dihydroneopterin triphosphate biosynthesis; 7,8-dihydroneopterin triphosphate from GTP: step 1/1. Its function is as follows. Converts GTP to 7,8-dihydroneopterin triphosphate. This is GTP cyclohydrolase FolE2 from Serratia proteamaculans (strain 568).